We begin with the raw amino-acid sequence, 788 residues long: MGDLKGSRKRKAVTRDLDEEPGVVSGDELNLDALDGDLSDKSHDTEHSSDSEIELVDDLSSDDGEEYEDEFDSDEIPSDIESKPIREKSKPDRGVDIFVRGEEVTSDGELGDGYDDDKLNYRVTKDANGNERYIYDEINPDDNSDYSEADENANTIGNIPLSFYDQYPHIGYNINGKKIMRPAMGQALDTLLDSIELPKGFTGLTDPSTGKPLELNQDELELLRKVQMNEITEDGYDPYQPTIEYFTSKLEIMPLNAAPEPKRRFVPSKHEAKRVMKLVKAIREGRILPYKPLTEKAEAEEGVWTYDLWANETPRADHPMHIPAPKLPPPGYEESYHPPPEYLPDEKEKAAWLNTDPEDREREYLPADYDALRKVPGYDSFVKEKFERCLDLYLAPRVRRSKLNIDPESLLPKLPSPEELKPFPSTCATLFRGHSGRVRTLAIDPTGVWLASGGDDGTVRVWELLTGRQIWSVKLSDEEPVNVIRWRPSKDAVVLAAATGDSIHLIVPPILDPEMEKASLDIVDAGWGYAKTLTSDSTKKTSAQWTRPSPSLLDSGVQAVISLGYVAKSLSWHRRGDYFVTVCPGTATPVSLAIAIHTLSKHLTQHPFRRRLKGGGPPQAAHFHPSKPILFVANQRTIRSYDLSRQSLVKILQPGARWISSFDIHPTSSTTSGGDNLIVGSYDRRLLWHDVDLSPRPYKTLRYHQKAIRAVRYHSNYPLFADASDDGSLQIFHGSVTGDLLSNASIVPLKVLRGHKVTGELGVLDLDWHPREAWCVSAGADGTCRLWT.

The disordered stretch occupies residues 1–91; the sequence is MGDLKGSRKR…SKPIREKSKP (91 aa). Residues 38–50 are compositionally biased toward basic and acidic residues; the sequence is LSDKSHDTEHSSD. A compositionally biased stretch (acidic residues) spans 51–78; the sequence is SEIELVDDLSSDDGEEYEDEFDSDEIPS. Positions 80-91 are enriched in basic and acidic residues; it reads IESKPIREKSKP. 6 WD repeats span residues 433-472, 476-516, 613-651, 654-699, 703-742, and 758-788; these read GHSGRVRTLAIDPTGVWLASGGDDGTVRVWELLTGRQIWS, SDEE…PEME, KGGGPPQAAHFHPSKPILFVANQRTIRSYDLSRQSLVKI, PGAR…RPYK, YHQKAIRAVRYHSNYPLFADASDDGSLQIFHGSVTGDLLS, and TGELGVLDLDWHPREAWCVSAGADGTCRLWT.

The protein belongs to the WD repeat BOP1/ERB1 family. As to quaternary structure, component of the NOP7 complex, composed of ERB1, NOP7 and YTM1. The complex is held together by ERB1, which interacts with NOP7 via its N-terminal domain and with YTM1 via a high-affinity interaction between the seven-bladed beta-propeller domains of the 2 proteins. The NOP7 complex associates with the 66S pre-ribosome.

Its subcellular location is the nucleus. The protein localises to the nucleolus. The protein resides in the nucleoplasm. Its function is as follows. Component of the NOP7 complex, which is required for maturation of the 25S and 5.8S ribosomal RNAs and formation of the 60S ribosome. The chain is Ribosome biogenesis protein ERB1 from Ajellomyces capsulatus (strain NAm1 / WU24) (Darling's disease fungus).